The chain runs to 330 residues: Putative 1-aminocyclopropane-1-carboxylate deaminase (330 aa).

At K54 the chain carries N6-(pyridoxal phosphate)lysine.

It belongs to the ACC deaminase/D-cysteine desulfhydrase family. Pyridoxal 5'-phosphate serves as cofactor.

The enzyme catalyses 1-aminocyclopropane-1-carboxylate + H2O = 2-oxobutanoate + NH4(+). The sequence is that of Putative 1-aminocyclopropane-1-carboxylate deaminase from Pyrococcus abyssi (strain GE5 / Orsay).